The sequence spans 203 residues: High frequency lysogenization protein HflD homolog (203 aa).

This sequence belongs to the HflD family.

The protein resides in the cytoplasm. The protein localises to the cell inner membrane. The polypeptide is High frequency lysogenization protein HflD homolog (Histophilus somni (strain 2336) (Haemophilus somnus)).